Consider the following 214-residue polypeptide: Cytolysin tenebrosin-B (214 aa).

A signal peptide spans 1-19; sequence MNRLIIVFIVVTMICAATA. The propeptide occupies 20–35; the sequence is LSTKRRINKEEKDEKR. Positions 38-47 are plays an important role in the hemolytic activity; the sequence is AVAGAVIEGA. Residues 46 to 65 are N-terminal region; the sequence is GATLTFNVLQTVLKALGDIS. Phosphocholine is bound by residues Ser89, Val122, Ser140, Pro142, Tyr168, Tyr172, and Tyr173. The interval 140 to 155 is trp-rich region, which is important for the binding to lipid membrane; it reads SIPFDYNLYSNWWNVK. The Cell attachment site, crucial for protein stability motif lies at 179–181; it reads RGD.

Belongs to the actinoporin family. Sea anemone subfamily. Octamer or nonamer in membranes. Monomer in the soluble state.

The protein resides in the secreted. It localises to the nematocyst. It is found in the target cell membrane. Pore-forming protein that forms cations-selective hydrophilic pores of around 1 nm and causes cardiac stimulation and cytolysis. Pore formation is a multi-step process that involves specific recognition of membrane sphingomyelin (but neither cholesterol nor phosphatidylcholine) using aromatic rich region and adjacent phosphocholine (POC) binding site, firm binding to the membrane (mainly driven by hydrophobic interactions) accompanied by the transfer of the N-terminal region to the lipid-water interface and finally pore formation after oligomerization of monomers. This Actinia tenebrosa (Australian red waratah sea anemone) protein is Cytolysin tenebrosin-B.